Consider the following 35-residue polypeptide: uncharacterized protein (35 aa).

The signal sequence occupies residues 1-18 (MRSLVFVQLSLLSWEIFC).

This is an uncharacterized protein from Saccharomyces cerevisiae (strain ATCC 204508 / S288c) (Baker's yeast).